The chain runs to 574 residues: VAO-type flavoprotein oxidase VAO615 (574 aa).

An N-terminal signal peptide occupies residues 1-17 (MPASLLRFLALAGTAVG). Intrachain disulfides connect Cys28–Cys572, Cys64–Cys77, Cys108–Cys118, and Cys450–Cys476. Residue Asn47 is glycosylated (N-linked (GlcNAc...) asparagine). Asn105 carries N-linked (GlcNAc...) asparagine glycosylation. Residues 120–299 (LGNYPSYVVN…LSMTARLHRD (180 aa)) enclose the FAD-binding PCMH-type domain. N-linked (GlcNAc...) asparagine glycosylation is found at Asn129, Asn211, Asn310, Asn346, and Asn438. The segment at residues 157 to 222 (HDYLGKSTGK…TGHRIVGGTC (66 aa)) is a cross-link (6-(S-cysteinyl)-8alpha-(pros-histidyl)-FAD (His-Cys)).

Belongs to the oxygen-dependent FAD-linked oxidoreductase family. The cofactor is FAD. In terms of processing, the FAD cofactor is bound via a bicovalent 6-S-cysteinyl, 8alpha-N1-histidyl FAD linkage.

The protein localises to the secreted. Its function is as follows. Probably oxidoreductase that, when reduced, rapidly reacts with molecular oxygen, a hallmark of flavoprotein oxidases. A large panel of alcohols, including carbohydrates, steroids and secondary alcohols were tested as potential substrates, but none has been identified so far. The chain is VAO-type flavoprotein oxidase VAO615 from Thermothelomyces thermophilus (strain ATCC 42464 / BCRC 31852 / DSM 1799) (Sporotrichum thermophile).